We begin with the raw amino-acid sequence, 319 residues long: Ribosomal RNA small subunit methyltransferase H (319 aa).

S-adenosyl-L-methionine contacts are provided by residues 37–39, Asp57, Phe96, Asp105, and Gln112; that span reads GGY. Over residues 292–302 the composition is skewed to basic and acidic residues; the sequence is RPDEREKERNP. The segment at 292–319 is disordered; it reads RPDEREKERNPRSRSARLRAVEKQGVPA.

This sequence belongs to the methyltransferase superfamily. RsmH family.

It localises to the cytoplasm. The enzyme catalyses cytidine(1402) in 16S rRNA + S-adenosyl-L-methionine = N(4)-methylcytidine(1402) in 16S rRNA + S-adenosyl-L-homocysteine + H(+). Functionally, specifically methylates the N4 position of cytidine in position 1402 (C1402) of 16S rRNA. The protein is Ribosomal RNA small subunit methyltransferase H of Syntrophobacter fumaroxidans (strain DSM 10017 / MPOB).